The primary structure comprises 180 residues: Inner membrane-spanning protein YciB (180 aa).

5 helical membrane passes run Ile-22 to Leu-42, Met-50 to Ser-70, Leu-72 to Ser-92, Leu-121 to Leu-141, and Phe-149 to Ile-169.

This sequence belongs to the YciB family.

The protein resides in the cell inner membrane. Plays a role in cell envelope biogenesis, maintenance of cell envelope integrity and membrane homeostasis. This chain is Inner membrane-spanning protein YciB, found in Yersinia pseudotuberculosis serotype O:1b (strain IP 31758).